Here is a 391-residue protein sequence, read N- to C-terminus: Choline/ethanolaminephosphotransferase 1 (391 aa).

The Lumenal portion of the chain corresponds to 1–49 (MGYFVPDSHIENLKSYKYQSEDRSLVSKYFLKPFWQRFCHIFPTWMAPN). Residues 50 to 69 (IITLSGFAFIVINVLTVFYY) traverse the membrane as a helical segment. At 70 to 172 (DPNLNTDTPR…YHTHTLYLSE (103 aa)) the chain is on the cytoplasmic side. Residues 173-193 (FSGPVEGILIVCVSLILTGIY) form a helical membrane-spanning segment. Over 194-211 (GKQVIWHTYLFTITVGDK) the chain is Lumenal. The helical transmembrane segment at 212–232 (VIDVDTLDIVFSLAVFGLVMN) threads the bilayer. Topologically, residues 233-264 (ALSAKRNVDKYYRNSTSSANNITQIEQDSAIK) are cytoplasmic. The helical transmembrane segment at 265–282 (GLLPFFAYYASIALLVWM) threads the bilayer. At 283–285 (QPS) the chain is on the lumenal side. The helical transmembrane segment at 286–308 (FITLSFILSVGFTGAFTVGRIIV) threads the bilayer. The Cytoplasmic portion of the chain corresponds to 309-321 (CHLTKQSFPMFNA). Residues 322 to 342 (PMLIPLCQIVLYKICLSLWGI) traverse the membrane as a helical segment. The Lumenal portion of the chain corresponds to 343–346 (ESNK). Residues 347–367 (IVFALSWLGFGLSLGVHIMFM) form a helical membrane-spanning segment. Topologically, residues 368-391 (NDIIHEFTEYLDVYALSIKRSKLT) are cytoplasmic.

The protein belongs to the CDP-alcohol phosphatidyltransferase class-I family. Mg(2+) serves as cofactor.

It is found in the golgi apparatus membrane. It catalyses the reaction CDP-ethanolamine + a 1,2-diacyl-sn-glycerol = a 1,2-diacyl-sn-glycero-3-phosphoethanolamine + CMP + H(+). The enzyme catalyses CDP-choline + a 1,2-diacyl-sn-glycerol = a 1,2-diacyl-sn-glycero-3-phosphocholine + CMP + H(+). It carries out the reaction CDP-N-methylethanolamine + a 1,2-diacyl-sn-glycerol = a 1,2-diacyl-sn-glycero-3-phospho-N-methylethanolamine + CMP + H(+). The catalysed reaction is CDP-N,N-dimethylethanolamine + a 1,2-diacyl-sn-glycerol = a 1,2-diacyl-sn-glycero-3-phospho-N,N-dimethylethanolamine + CMP + H(+). It catalyses the reaction 1,2-di-(9Z-octadecenoyl)-glycerol + CDP-choline = 1,2-di-(9Z-octadecenoyl)-sn-glycero-3-phosphocholine + CMP + H(+). The enzyme catalyses 1,2-di-(9Z-octadecenoyl)-glycerol + CDP-ethanolamine = 1,2-di-(9Z-octadecenoyl)-sn-glycero-3-phosphoethanolamine + CMP + H(+). It functions in the pathway phospholipid metabolism; phosphatidylethanolamine biosynthesis; phosphatidylethanolamine from ethanolamine: step 3/3. The protein operates within phospholipid metabolism; phosphatidylcholine biosynthesis; phosphatidylcholine from phosphocholine: step 2/2. Requires a divalent cation activator, and is inhibited by CMP. Activated by phospholipids, especially phosphatidylcholine. Functionally, catalyzes the final step in the CDP-ethanolamine route leading to phosphatidylethanolamine (PE). Can also catalyze the formation of phosphatidylcholine (PC) from CDP-choline, but does not substantially contribute to PC biosynthesis. Preferentially uses CDP-dimethylethanolamine and CDP-propanolamine as aminoalcohol substrates. Shows highest activity toward di-unsaturated diacylglycerol species as lipid substrates. The CDP-ethanolamine pathway may play a role in maintaining the proper PE species distribution. The polypeptide is Choline/ethanolaminephosphotransferase 1 (EPT1) (Saccharomyces cerevisiae (strain ATCC 204508 / S288c) (Baker's yeast)).